Reading from the N-terminus, the 958-residue chain is Importin-13 (958 aa).

20 HEAT repeats span residues 19-49 (ENVE…QAQV), 51-83 (PQAW…RSPA), 90-130 (PDQY…LSMM), 137-174 (AVAD…EFQT), 189-226 (LAQE…SWVQ), 231-263 (LMDC…NAIS), 271-320 (VNTL…ALLD), 325-367 (WQSF…DDIL), 370-433 (EPDK…YEML), 435-471 (AELL…FQSI), 482-517 (VVPG…WLAD), 519-553 (PVMI…CREC), 557-595 (LPPY…LLSA), 598-643 (VEEI…SNLF), 671-711 (PVVV…VKTL), 715-749 (FAPM…VHIF), 756-798 (FPPI…ALKR), 810-840 (VKAL…TELL), 855-888 (ENGK…FALN), and 892-926 (FSYL…QQIL). The 67-residue stretch at 40–106 (AQKWLMQAQV…KSQLFTHITR (67 aa)) folds into the Importin N-terminal domain.

Belongs to the importin beta family.

It is found in the cytoplasm. The protein resides in the nucleus. Functions in nuclear protein import as nuclear transport receptor. Serves as receptor for nuclear localization signals (NLS) in cargo substrates. Is thought to mediate docking of the importin/substrate complex to the nuclear pore complex (NPC) through binding to nucleoporin and the complex is subsequently translocated through the pore by an energy requiring, Ran-dependent mechanism. At the nucleoplasmic side of the NPC, Ran binds to the importin, the importin/substrate complex dissociates and importin is re-exported from the nucleus to the cytoplasm where GTP hydrolysis releases Ran. The directionality of nuclear import is thought to be conferred by an asymmetric distribution of the GTP- and GDP-bound forms of Ran between the cytoplasm and nucleus. The sequence is that of Importin-13 (IPO13) from Gallus gallus (Chicken).